The chain runs to 449 residues: Asparagine--tRNA ligase (449 aa).

This sequence belongs to the class-II aminoacyl-tRNA synthetase family. As to quaternary structure, homodimer.

Its subcellular location is the cytoplasm. It carries out the reaction tRNA(Asn) + L-asparagine + ATP = L-asparaginyl-tRNA(Asn) + AMP + diphosphate + H(+). This is Asparagine--tRNA ligase from Desulfotalea psychrophila (strain LSv54 / DSM 12343).